A 346-amino-acid polypeptide reads, in one-letter code: KH domain-containing, RNA-binding, signal transduction-associated protein 3 (346 aa).

An involved in homodimerization region spans residues 1–160; it reads MEEKYLPELM…IKKFLIPDYN (160 aa). K4 participates in a covalent cross-link: Glycyl lysine isopeptide (Lys-Gly) (interchain with G-Cter in SUMO2). Residues 61–127 form the KH domain; that stretch reads LIPVKQFPKF…AKYFHLNDDL (67 aa). Disordered regions lie at residues 212 to 266 and 317 to 346; these read RPVA…QETY and GQEEWTNSRHKAPSARTAKGVYRDQPYGRY. Pro residues predominate over residues 253–262; that stretch reads GYRPPPPPPT.

The protein belongs to the KHDRBS family. In terms of assembly, self-associates to form homooligomers; dimerization increases RNA affinity. Interacts with KHDRBS2/SLM-1. Interacts with KHDRBS1/SAM68; heterooligomer formation of KHDRBS family proteins may modulate RNA substrate specificity. Interacts with the splicing regulatory proteins SFRS9, SAFB and YTHDC1. Interacts with HNRPL, RBMX, p85 subunit of PI3-kinase, SERPINB5. Phosphorylated on tyrosine residues by PTK6. In terms of tissue distribution, highly expressed in testis and brain. In adult cerebellum expressed predominantly in internal granular layer interneurons and in hippocampus is exclusively expressed in CA neurons; expression is restricted to neuronal subpopulations largely non-overlapping with expression of KHDRBS2/SLM-1.

It is found in the nucleus. Functionally, RNA-binding protein that plays a role in the regulation of alternative splicing and influences mRNA splice site selection and exon inclusion. Binds preferentially to the 5'-[AU]UAAA-3' motif in vitro. Binds optimally to RNA containing 5'-[AU]UAA-3' as a bipartite motif spaced by more than 15 nucleotides. Binds poly(A). RNA-binding abilities are down-regulated by tyrosine kinase PTK6. Involved in splice site selection of vascular endothelial growth factor. In vitro regulates CD44 alternative splicing by direct binding to purine-rich exonic enhancer. Can regulate alternative splicing of neurexins NRXN1-3 in the laminin G-like domain 6 containing the evolutionary conserved neurexin alternative spliced segment 4 (AS4) involved in neurexin selective targeting to postsynaptic partners such as neuroligins and LRRTM family members. High concentrations in forebrain structures block splicing inclusion of NRXN1-3 AS4 exons while low concentrations favor their inclusion. Targeted, cell-type specific splicing regulation of NRXN1 at AS4 is involved in neuronal glutamatergic synapse function and plasticity and is linked to behavioral aspects. Regulates expression of KHDRBS2/SLIM-1 in defined neuron populations in the hippocampus by modifying its alternative splicing resulting in a transcript predicted to undergo nonsense-mediated decay. Can bind FABP9 mRNA. May play a role as a negative regulator of cell growth. Inhibits cell proliferation. The polypeptide is KH domain-containing, RNA-binding, signal transduction-associated protein 3 (Khdrbs3) (Mus musculus (Mouse)).